The primary structure comprises 155 residues: Ribosome maturation factor RimP (155 aa).

The protein belongs to the RimP family.

It localises to the cytoplasm. Required for maturation of 30S ribosomal subunits. The chain is Ribosome maturation factor RimP from Synechococcus sp. (strain WH7803).